A 113-amino-acid chain; its full sequence is MGTTMLAEPRTLTKAELAELLFERVGLNKREAKDIVDTFFEEIRDALARGDSVKLSGFGNFQVRDKPPRPGRNPKTGETIPIAARRVVTFHASQKLKSVVEQPSSPPDPASAE.

Positions 59 to 80 are disordered; the sequence is GNFQVRDKPPRPGRNPKTGETI.

The protein belongs to the bacterial histone-like protein family. In terms of assembly, heterodimer of an alpha and a beta chain.

This protein is one of the two subunits of integration host factor, a specific DNA-binding protein that functions in genetic recombination as well as in transcriptional and translational control. The polypeptide is Integration host factor subunit alpha (Bordetella bronchiseptica (strain ATCC BAA-588 / NCTC 13252 / RB50) (Alcaligenes bronchisepticus)).